A 180-amino-acid polypeptide reads, in one-letter code: Amnesiac neuropeptides (180 aa).

A signal peptide spans 1-32; sequence MRSFCCCFYPAAVALHCVLLFYTFFLLFRASA. 2 consecutive propeptides follow at residues 33-35 and 152-180; these read LRR and GRRS…GEMR. The disordered stretch occupies residues 155-180; it reads SVPRGQPKFSRENPRALSPSLLGEMR.

Enriched expression in the embryonic and larval nervous systems. Strongly expressed in two large neurons that project over all the lobes of the mushroom bodies.

It localises to the secreted. Its function is as follows. Required for associative learning and memory in adults. Expression pattern suggests a modulatory role in memory formation. Controls neurotransmitter-mediated signaling pathways associated with the structure of the larval peripheral nerve. The chain is Amnesiac neuropeptides (amn) from Drosophila melanogaster (Fruit fly).